The sequence spans 514 residues: Major capsid protein (514 aa).

The protein belongs to the T4 phage capsid protein family. In terms of assembly, homohexamer. Interacts with the portal protein. Interacts with the capsid vertex protein that forms pentamers. A proteolytic cleavage by the prohead core protein protease gives rise to the mature major capsid protein during virus maturation.

The protein resides in the virion. Its function is as follows. Major capsid protein that self-associates to form hexamers, building most of the capsid in association with pentons made of the capsid vertex protein and one dodecamer of the portal protein. This chain is Major capsid protein, found in Vibrio parahaemolyticus (KVP40).